Consider the following 171-residue polypeptide: MSLLQVLHYPDERLRKVAKPVVDVNDAIRRIVDDMFETMYAEEGIGLAATQVDIHQRIIVIDVSESRDQRLVMINPELLEKSGETGIDEGCLSIPDQRGFVPRAEKVKVQALDRDGNSFELEADDLLAICIQHEMDHLVGKLFVDYLSPLKRQRIRQKMEKLARMTARAEK.

Fe cation contacts are provided by C91 and H133. Residue E134 is part of the active site. A Fe cation-binding site is contributed by H137.

The protein belongs to the polypeptide deformylase family. Requires Fe(2+) as cofactor.

It carries out the reaction N-terminal N-formyl-L-methionyl-[peptide] + H2O = N-terminal L-methionyl-[peptide] + formate. In terms of biological role, removes the formyl group from the N-terminal Met of newly synthesized proteins. Requires at least a dipeptide for an efficient rate of reaction. N-terminal L-methionine is a prerequisite for activity but the enzyme has broad specificity at other positions. This Sodalis glossinidius (strain morsitans) protein is Peptide deformylase.